Consider the following 263-residue polypeptide: Small ribosomal subunit protein eS4 (263 aa).

Positions 42–104 constitute an S4 RNA-binding domain; sequence LPLIVFLRNR…TGEHFRLVYD (63 aa).

This sequence belongs to the eukaryotic ribosomal protein eS4 family.

The protein is Small ribosomal subunit protein eS4 (RPS4Y1) of Pan paniscus (Pygmy chimpanzee).